We begin with the raw amino-acid sequence, 234 residues long: Polycomb group RING finger protein 5-A (234 aa).

Residues 18–57 (CSICRGYLIKPTAVTECLHTFCKSCIVQHFEESNECPECG) form an RING-type zinc finger. A disordered region spans residues 97–130 (FWRKHKIKSNGEDGPRAKKSRLSGEDDDGNGGDY).

Component of a PRC1-like complex.

The protein resides in the nucleus. Functionally, component of Polycomb group (PcG) multiprotein complexes; the complex class is required to maintain the transcriptionally repressive state of some genes. In Danio rerio (Zebrafish), this protein is Polycomb group RING finger protein 5-A.